The following is a 222-amino-acid chain: MRTAVIQFPGSNCDADALHAARLTLDPDAGFVWHTETALPRGTELVFLPGGFSYGDHLRSGAIAARSPIMAAVKAHAERGGFVLGVCNGFQVLTEAGLLPGALSRNRDLHFRCAPVHLRVENAQTVFTRAYQPGQILEIPIAHGEGNYYADPETIARLEAEGRVVFRYVDNPNGSLNDIAGIVNERGNVLGMMPHPERAVEALLGSEDGRGIFESLKGALVQ.

The 221-residue stretch at 2-222 (RTAVIQFPGS…FESLKGALVQ (221 aa)) folds into the Glutamine amidotransferase type-1 domain. The active-site Nucleophile is the C87. Residues H195 and E197 contribute to the active site.

Part of the FGAM synthase complex composed of 1 PurL, 1 PurQ and 2 PurS subunits.

It is found in the cytoplasm. It catalyses the reaction N(2)-formyl-N(1)-(5-phospho-beta-D-ribosyl)glycinamide + L-glutamine + ATP + H2O = 2-formamido-N(1)-(5-O-phospho-beta-D-ribosyl)acetamidine + L-glutamate + ADP + phosphate + H(+). It carries out the reaction L-glutamine + H2O = L-glutamate + NH4(+). The protein operates within purine metabolism; IMP biosynthesis via de novo pathway; 5-amino-1-(5-phospho-D-ribosyl)imidazole from N(2)-formyl-N(1)-(5-phospho-D-ribosyl)glycinamide: step 1/2. Functionally, part of the phosphoribosylformylglycinamidine synthase complex involved in the purines biosynthetic pathway. Catalyzes the ATP-dependent conversion of formylglycinamide ribonucleotide (FGAR) and glutamine to yield formylglycinamidine ribonucleotide (FGAM) and glutamate. The FGAM synthase complex is composed of three subunits. PurQ produces an ammonia molecule by converting glutamine to glutamate. PurL transfers the ammonia molecule to FGAR to form FGAM in an ATP-dependent manner. PurS interacts with PurQ and PurL and is thought to assist in the transfer of the ammonia molecule from PurQ to PurL. In Deinococcus geothermalis (strain DSM 11300 / CIP 105573 / AG-3a), this protein is Phosphoribosylformylglycinamidine synthase subunit PurQ.